The sequence spans 512 residues: GMP synthase [glutamine-hydrolyzing] (512 aa).

The Glutamine amidotransferase type-1 domain maps to 7–197 (TILILDFGGQ…LFEVCDCSAD (191 aa)). The active-site Nucleophile is the Cys84. Active-site residues include His171 and Glu173. Residues 198 to 387 (WTMDSLIEQT…LGIPDEILYR (190 aa)) form the GMPS ATP-PPase domain. 225 to 231 (SGGVDSA) serves as a coordination point for ATP.

As to quaternary structure, homodimer.

It catalyses the reaction XMP + L-glutamine + ATP + H2O = GMP + L-glutamate + AMP + diphosphate + 2 H(+). It participates in purine metabolism; GMP biosynthesis; GMP from XMP (L-Gln route): step 1/1. Catalyzes the synthesis of GMP from XMP. This Caldanaerobacter subterraneus subsp. tengcongensis (strain DSM 15242 / JCM 11007 / NBRC 100824 / MB4) (Thermoanaerobacter tengcongensis) protein is GMP synthase [glutamine-hydrolyzing].